Consider the following 161-residue polypeptide: Large ribosomal subunit protein uL15 (161 aa).

The disordered stretch occupies residues methionine 1–alanine 41. Over residues arginine 22–valine 36 the composition is skewed to gly residues.

Belongs to the universal ribosomal protein uL15 family. Part of the 50S ribosomal subunit.

Functionally, binds to the 23S rRNA. In Caulobacter sp. (strain K31), this protein is Large ribosomal subunit protein uL15.